The primary structure comprises 943 residues: Aconitate hydratase A (943 aa).

Cys479, Cys545, and Cys548 together coordinate [4Fe-4S] cluster.

This sequence belongs to the aconitase/IPM isomerase family. Monomer. The cofactor is [4Fe-4S] cluster.

The catalysed reaction is citrate = D-threo-isocitrate. It catalyses the reaction (2S,3R)-3-hydroxybutane-1,2,3-tricarboxylate = 2-methyl-cis-aconitate + H2O. The protein operates within carbohydrate metabolism; tricarboxylic acid cycle; isocitrate from oxaloacetate: step 2/2. It participates in organic acid metabolism; propanoate degradation. Involved in the catabolism of short chain fatty acids (SCFA) via the tricarboxylic acid (TCA)(acetyl degradation route) and probably via the 2-methylcitrate cycle I (propionate degradation route). Catalyzes the reversible isomerization of citrate to isocitrate via cis-aconitate. The apo form of AcnA functions as a RNA-binding regulatory protein which binds to selected IRE-like sequences present within the UTRs (untranslated regions) of 3' trxC and 5' IdeR mRNA. Could catalyze the hydration of 2-methyl-cis-aconitate to yield (2R,3S)-2-methylisocitrate. This Mycobacterium tuberculosis (strain ATCC 25618 / H37Rv) protein is Aconitate hydratase A (acn).